Consider the following 380-residue polypeptide: Homoserine O-acetyltransferase (380 aa).

In terms of domain architecture, AB hydrolase-1 spans 59-363 (NVVMVLHALT…IYGHDGFLVE (305 aa)). Catalysis depends on S164, which acts as the Nucleophile. Residue R234 participates in substrate binding. Active-site residues include D327 and H357. Residue D358 coordinates substrate.

It belongs to the AB hydrolase superfamily. MetX family. Homodimer.

Its subcellular location is the cytoplasm. The enzyme catalyses L-homoserine + acetyl-CoA = O-acetyl-L-homoserine + CoA. Its pathway is amino-acid biosynthesis; L-methionine biosynthesis via de novo pathway; O-acetyl-L-homoserine from L-homoserine: step 1/1. In terms of biological role, transfers an acetyl group from acetyl-CoA to L-homoserine, forming acetyl-L-homoserine. In Mycolicibacterium smegmatis (strain ATCC 700084 / mc(2)155) (Mycobacterium smegmatis), this protein is Homoserine O-acetyltransferase.